The primary structure comprises 1475 residues: Mediator of RNA polymerase II transcription subunit 1 (1475 aa).

A compositionally biased stretch (polar residues) spans 1–10; the sequence is MSGSNAKSSG. Disordered regions lie at residues 1–26, 616–644, 709–992, 1135–1166, 1184–1245, 1263–1354, and 1387–1475; these read MSGS…KNKQ, ETDP…KTSD, GVTA…VASG, QPQP…AGAS, NKTG…SKKA, KANS…RFDH, and PKLS…LAGE. 3 stretches are compositionally biased toward low complexity: residues 621 to 641, 711 to 729, and 738 to 782; these read SGSS…GSAK, TASS…ITGK, and KSTA…SGSS. 4 positions are modified to phosphoserine: S830, S834, S854, and S858. Composition is skewed to polar residues over residues 860 to 874 and 888 to 897; these read VYSS…NSPK and GKPSMSTLKS. Positions 919–934 are enriched in low complexity; the sequence is TSSGPSASSGSSGATG. Pro residues predominate over residues 944-953; sequence APPPPPPIPP. Composition is skewed to low complexity over residues 954-966, 973-989, 1143-1159, 1185-1225, and 1265-1276; these read LASS…SSQS, SSAS…TAGV, TSSC…SAGS, KTGS…TGST, and NSSGNLSSKLSG. Residues 1286–1296 are compositionally biased toward polar residues; it reads TKSNSTNSFQE. Low complexity-rich tracts occupy residues 1334 to 1346 and 1399 to 1409; these read SGSV…GSMS and TSGRSTPSGSS. Polar residues-rich tracts occupy residues 1415 to 1430 and 1442 to 1458; these read GTSS…STGL and SQSG…TAGT.

The protein belongs to the Mediator complex subunit 1 family. In terms of assembly, component of the Mediator complex.

It is found in the nucleus. Functionally, component of the Mediator complex, a coactivator involved in the regulated transcription of nearly all RNA polymerase II-dependent genes. Mediator functions as a bridge to convey information from gene-specific regulatory proteins to the basal RNA polymerase II transcription machinery. Mediator is recruited to promoters by direct interactions with regulatory proteins and serves as a scaffold for the assembly of a functional preinitiation complex with RNA polymerase II and the general transcription factors. Required for activated transcription of the MtnA, MtnB and MtnD genes. This Drosophila melanogaster (Fruit fly) protein is Mediator of RNA polymerase II transcription subunit 1 (MED1).